The following is a 231-amino-acid chain: Transmembrane protein 225 (231 aa).

Topologically, residues 1–13 are cytoplasmic; that stretch reads MVHILVRKVEATN. Residues 14 to 34 traverse the membrane as a helical segment; sequence MFFSSWTLVFLAVGIIIEEWA. The Extracellular segment spans residues 35-67; sequence ELKLGPQKPTITHSPWICCTPLWPSDGLEVIRN. A helical transmembrane segment spans residues 68–88; sequence ILIVVLSLSFMHNLLLGFEFT. The Cytoplasmic portion of the chain corresponds to 89 to 97; the sequence is YMIPQTKYT. Residues 98–118 traverse the membrane as a helical segment; sequence LIMTACLAFLTGILLLGALLL. Residues 119–135 lie on the Extracellular side of the membrane; sequence YHHMLRQGESVYYSSYK. A helical membrane pass occupies residues 136–156; the sequence is ISWIIFTAYLNVLFLFISGFL. At 157–231 the chain is on the cytoplasmic side; that stretch reads SLLQYKQPID…IQARRVTWAL (75 aa). Residues 225-229 carry the RVxF motif; the sequence is RRVTW.

In terms of assembly, interacts (via RVxF motif) with PPP1CC.

Its subcellular location is the cytoplasmic vesicle. The protein resides in the secretory vesicle. The protein localises to the acrosome membrane. Its function is as follows. Probably inhibits protein phosphatase 1 (PP1) in sperm via binding to catalytic subunit PPP1CC. This chain is Transmembrane protein 225 (TMEM225), found in Bos taurus (Bovine).